A 481-amino-acid chain; its full sequence is ATP synthase subunit beta (481 aa).

Residue 167–174 (GGAGVGKT) participates in ATP binding.

Belongs to the ATPase alpha/beta chains family. In terms of assembly, F-type ATPases have 2 components, CF(1) - the catalytic core - and CF(0) - the membrane proton channel. CF(1) has five subunits: alpha(3), beta(3), gamma(1), delta(1), epsilon(1). CF(0) has three main subunits: a(1), b(2) and c(9-12). The alpha and beta chains form an alternating ring which encloses part of the gamma chain. CF(1) is attached to CF(0) by a central stalk formed by the gamma and epsilon chains, while a peripheral stalk is formed by the delta and b chains.

The protein resides in the cell membrane. It carries out the reaction ATP + H2O + 4 H(+)(in) = ADP + phosphate + 5 H(+)(out). Produces ATP from ADP in the presence of a proton gradient across the membrane. The catalytic sites are hosted primarily by the beta subunits. In Corynebacterium jeikeium (strain K411), this protein is ATP synthase subunit beta.